Reading from the N-terminus, the 793-residue chain is Methionine--tRNA ligase (793 aa).

Positions 11 to 21 match the 'HIGH' region motif; that stretch reads PYVNNFPHLGN. The Zn(2+) site is built by Cys142, Cys145, Cys155, and Cys158. Residues 334–338 carry the 'KMSKS' region motif; sequence KFSKS. Lys337 serves as a coordination point for ATP. Positions 581–590 are enriched in basic and acidic residues; it reads SQKDRKKSEK. The disordered stretch occupies residues 581 to 610; that stretch reads SQKDRKKSEKGCSACKDSGSSKSDAAASSA. A compositionally biased stretch (low complexity) spans 591–610; that stretch reads GCSACKDSGSSKSDAAASSA. The tRNA-binding domain occupies 622 to 727; the sequence is FSKKIALKTA…PWAAPGTPVI (106 aa).

This sequence belongs to the class-I aminoacyl-tRNA synthetase family. MetG type 1 subfamily. As to quaternary structure, homodimer. Zn(2+) serves as cofactor.

It is found in the cytoplasm. The catalysed reaction is tRNA(Met) + L-methionine + ATP = L-methionyl-tRNA(Met) + AMP + diphosphate. In terms of biological role, is required not only for elongation of protein synthesis but also for the initiation of all mRNA translation through initiator tRNA(fMet) aminoacylation. The sequence is that of Methionine--tRNA ligase from Treponema denticola (strain ATCC 35405 / DSM 14222 / CIP 103919 / JCM 8153 / KCTC 15104).